Reading from the N-terminus, the 42-residue chain is Thymosin beta-10 (42 aa).

Basic and acidic residues-rich tracts occupy residues 1-25 (MADK…ETQE) and 33-42 (ETIEQEKQAK). The disordered stretch occupies residues 1–42 (MADKPDLGEINSFDKAKLKKTETQEKNTLPTKETIEQEKQAK). Alanine 2 is modified (N-acetylalanine). Lysine 4 carries the N6-acetyllysine modification. At serine 12 the chain carries Phosphoserine. Lysine 15 carries the post-translational modification N6-acetyllysine. A phosphothreonine mark is found at threonine 21, threonine 23, and threonine 34. Lysine 39 carries the N6-acetyllysine modification.

Belongs to the thymosin beta family. In terms of tissue distribution, distributed in numerous types of tissues, including thymus, spleen, lung, liver and muscle.

Its subcellular location is the cytoplasm. The protein localises to the cytoskeleton. In terms of biological role, plays an important role in the organization of the cytoskeleton. Binds to and sequesters actin monomers (G actin) and therefore inhibits actin polymerization. This is Thymosin beta-10 (TMSB10) from Bos taurus (Bovine).